The following is a 1186-amino-acid chain: Tricalbin-1 (1186 aa).

The disordered stretch occupies residues 1-50; the sequence is MAKEDTGVTAPKKPETAQVANINGIDKLEPPKTKEETESSKSVSSEKAAH. The Cytoplasmic portion of the chain corresponds to 1-106; the sequence is MAKEDTGVTA…NIIPDSLYGD (106 aa). Residues 26 to 39 show a composition bias toward basic and acidic residues; it reads DKLEPPKTKEETES. The chain crosses the membrane as a helical span at residues 107 to 127; the sequence is WYHSVAIFFIGGVASFALGHY. K128 is a topological domain (extracellular). The chain crosses the membrane as a helical span at residues 129-149; that stretch reads FSMGSAFFVIVITSLLYRTSA. The Cytoplasmic segment spans residues 150–1186; that stretch reads KKYRGSIREL…HEMGEEETKF (1037 aa). The 204-residue stretch at 172–375 folds into the SMP-LTD domain; it reads DYESLEWLNA…PPFSLQLNIP (204 aa). C2 domains lie at 366–487, 512–636, and 640–757; these read PPFS…RNLK, EKKL…IKIT, and RPVR…DKYE. A coiled-coil region spans residues 795–822; the sequence is LEEIQDLDKVNKKKKALELRKSAIDEKK. The 119-residue stretch at 976–1094 folds into the C2 4 domain; the sequence is PIDTKQLPAN…KVEGTTELDV (119 aa). At S1000 the chain carries Phosphoserine. The Ca(2+) site is built by D1008, D1014, D1064, D1066, S1069, and D1072.

It belongs to the tricalbin family. Interacts with TCB2 via its C-terminal domain. Requires Ca(2+) as cofactor.

Its subcellular location is the cell membrane. It is found in the endoplasmic reticulum membrane. May play a role in membrane trafficking. The chain is Tricalbin-1 (TCB1) from Saccharomyces cerevisiae (strain ATCC 204508 / S288c) (Baker's yeast).